Reading from the N-terminus, the 297-residue chain is Ribosomal RNA small subunit methyltransferase H (297 aa).

S-adenosyl-L-methionine contacts are provided by residues 37–39 (GGH), Glu-56, Phe-87, Asp-102, and His-109.

This sequence belongs to the methyltransferase superfamily. RsmH family.

Its subcellular location is the cytoplasm. The catalysed reaction is cytidine(1402) in 16S rRNA + S-adenosyl-L-methionine = N(4)-methylcytidine(1402) in 16S rRNA + S-adenosyl-L-homocysteine + H(+). Specifically methylates the N4 position of cytidine in position 1402 (C1402) of 16S rRNA. This is Ribosomal RNA small subunit methyltransferase H from Borrelia duttonii (strain Ly).